The primary structure comprises 230 residues: Mitochondrial fission factor homolog B (230 aa).

Residues 1 to 210 (MSGAAFPSPT…ENKERAKREM (210 aa)) lie on the Cytoplasmic side of the membrane. The interval 117–153 (EQTSSVSHPSEEVRTQTKTRRERSVSENAGVHHNGPL) is disordered. Phosphoserine is present on Ser142. Residues 179–210 (VDATSLRRQIVKLNRRLQLLEEENKERAKREM) adopt a coiled-coil conformation. The chain crosses the membrane as a helical; Anchor for type IV membrane protein span at residues 211–228 (VMYSITVAFWLVNSWVWF). The Extracellular segment spans residues 229 to 230 (RR).

Belongs to the Tango11 family.

Its subcellular location is the mitochondrion outer membrane. The protein localises to the peroxisome. In terms of biological role, plays a role in mitochondrial and peroxisomal fission. Promotes the recruitment and association of the fission mediator dynamin-related protein 1 (DNM1L) to the mitochondrial surface. In Danio rerio (Zebrafish), this protein is Mitochondrial fission factor homolog B.